A 461-amino-acid polypeptide reads, in one-letter code: uncharacterized protein (461 aa).

Positions 86 to 127 (KMKPNKDDDEEEDEDDEDDEDDEEEDNEEEDNEEENEITIAP) are disordered. Positions 92–122 (DDDEEEDEDDEDDEDDEEEDNEEEDNEEENE) are enriched in acidic residues. Coiled coils occupy residues 95-123 (EEED…ENEI) and 405-459 (NKYI…KLKK).

This sequence belongs to the mimivirus L5 family.

This is an uncharacterized protein from Acanthamoeba polyphaga mimivirus (APMV).